A 323-amino-acid chain; its full sequence is tRNA-dihydrouridine(16) synthase (323 aa).

FMN-binding positions include 7–9 and glutamine 68; that span reads PME. Cysteine 98 serves as the catalytic Proton donor. Residues lysine 139, 199 to 201, and 223 to 224 each bind FMN; these read NGE and GR.

Belongs to the Dus family. DusC subfamily. It depends on FMN as a cofactor.

It carries out the reaction 5,6-dihydrouridine(16) in tRNA + NADP(+) = uridine(16) in tRNA + NADPH + H(+). The enzyme catalyses 5,6-dihydrouridine(16) in tRNA + NAD(+) = uridine(16) in tRNA + NADH + H(+). Functionally, catalyzes the synthesis of 5,6-dihydrouridine (D), a modified base found in the D-loop of most tRNAs, via the reduction of the C5-C6 double bond in target uridines. Specifically modifies U16 in tRNAs. The chain is tRNA-dihydrouridine(16) synthase from Pseudomonas putida (strain ATCC 47054 / DSM 6125 / CFBP 8728 / NCIMB 11950 / KT2440).